We begin with the raw amino-acid sequence, 434 residues long: Alpha-enolase (434 aa).

Ser40 serves as a coordination point for Mg(2+). Residues His158 and Glu167 each coordinate substrate. Glu210 serves as the catalytic Proton donor. The Mg(2+) site is built by Asp245, Glu293, and Asp318. Substrate contacts are provided by residues Glu293, Asp318, 370–373 (SHRS), and Lys394.

The protein belongs to the enolase family. As to quaternary structure, homodimer. It depends on Mg(2+) as a cofactor.

It localises to the cytoplasm. It catalyses the reaction (2R)-2-phosphoglycerate = phosphoenolpyruvate + H2O. The protein operates within carbohydrate degradation; glycolysis; pyruvate from D-glyceraldehyde 3-phosphate: step 4/5. The protein is Alpha-enolase of Trachemys scripta elegans (Red-eared slider turtle).